The primary structure comprises 62 residues: Neurotoxin 3 (62 aa).

The span at Leu1–Gly16 shows a compositional bias: polar residues. The disordered stretch occupies residues Leu1–Thr22. Cystine bridges form between Cys3-Cys24, Cys17-Cys41, Cys43-Cys54, and Cys55-Cys60.

This sequence belongs to the three-finger toxin family. Short-chain subfamily. Type I alpha-neurotoxin sub-subfamily. Expressed by the venom gland.

The protein resides in the secreted. Its function is as follows. Binds to muscle nicotinic acetylcholine receptor (nAChR) and inhibit acetylcholine from binding to the receptor, thereby impairing neuromuscular transmission. In Naja sputatrix (Malayan spitting cobra), this protein is Neurotoxin 3.